The sequence spans 58 residues: Microcin J25 (58 aa).

The propeptide occupies 1-37 (MIKHFHFNKLSSGKKNNVPSPAKGVIQIKKSASQLTK). Positions 38–45 (GGAGHVPE) form a cross-link, isoglutamyl glycine isopeptide (Gly-Glu).

The protein localises to the secreted. Functionally, peptide antibiotic that functions through inhibition of the bacterial DNA-dependent RNA polymerase (RNAP). Inhibits transcription by binding deep within RNAP secondary channel, where it sterically blocks the folding of the trigger loop, which is essential for efficient catalysis. In addition, it also seems to restrict access of nucleotide substrates to the catalytic center, and shows a partially competitive mode of inhibition with them. Exhibits potent bacteriocidal activity against a range of Enterobacteriaceae, including several pathogenic E.coli, Salmonella and Shigella strains. Also acts on the cytoplasmic membrane of Salmonella newport, producing alteration of membrane permeability and disruption of the subsequent gradient dissipation, which inhibits several processes essential for cell viability, such as oxygen consumption. Induces bacterial filamentation in susceptible cells in a non-SOS-dependent way, but this phenotype may result from impaired transcription of genes coding for cell division proteins. The protein is Microcin J25 (mcjA) of Escherichia coli.